Reading from the N-terminus, the 62-residue chain is uncharacterized protein (62 aa).

This is an uncharacterized protein from Saccharomyces cerevisiae (strain ATCC 204508 / S288c) (Baker's yeast).